The following is a 917-amino-acid chain: Protein translocase subunit SecA (917 aa).

Residues Gln-87, 105–109 (GEGKT), and Asp-516 contribute to the ATP site. 4 residues coordinate Zn(2+): Cys-901, Cys-903, Cys-912, and His-913.

This sequence belongs to the SecA family. In terms of assembly, monomer and homodimer. Part of the essential Sec protein translocation apparatus which comprises SecA, SecYEG and auxiliary proteins SecDF-YajC and YidC. The cofactor is Zn(2+).

It is found in the cell inner membrane. Its subcellular location is the cytoplasm. The catalysed reaction is ATP + H2O + cellular proteinSide 1 = ADP + phosphate + cellular proteinSide 2.. Its function is as follows. Part of the Sec protein translocase complex. Interacts with the SecYEG preprotein conducting channel. Has a central role in coupling the hydrolysis of ATP to the transfer of proteins into and across the cell membrane, serving both as a receptor for the preprotein-SecB complex and as an ATP-driven molecular motor driving the stepwise translocation of polypeptide chains across the membrane. This is Protein translocase subunit SecA from Acidovorax ebreus (strain TPSY) (Diaphorobacter sp. (strain TPSY)).